The following is a 278-amino-acid chain: Energy-coupling factor transporter ATP-binding protein EcfA1 (278 aa).

The ABC transporter domain maps to 5-239 (IRVQHLNYTY…GMELLRLGLD (235 aa)). 39–46 (GHNGSGKS) contributes to the ATP binding site. The Proton acceptor role is filled by glutamate 165.

This sequence belongs to the ABC transporter superfamily. Energy-coupling factor EcfA family. In terms of assembly, forms a stable energy-coupling factor (ECF) transporter complex probably composed of 2 membrane-embedded substrate-binding proteins (S component), 2 ATP-binding proteins (A component) and 2 transmembrane proteins (T component). This complex interacts with a number of substrate-specific components, including FolT and ThiT for 5-formyltetrahydrofolate and thiamine respectively.

It is found in the cell membrane. ATP-binding (A) component of a common energy-coupling factor (ECF) ABC-transporter complex. Unlike classic ABC transporters this ECF transporter provides the energy necessary to transport a number of different substrates including 5-formyltetrahydrofolate and thiamine. Expression of the complex plus FolT or ThiT in Lactococcus lactis subsp. cremoris (strain NZ9000) allows 5-formyltetrahydrofolate or thiamine uptake respectively; 5-formyltetrahydrofolate or thiamine are not taken up in the absence of FolT/ThiT or the EcfA1A2T complex. Deenergized L.lactis subsp. cremoris (treated with 2-deoxyglucose) does not take up substrate. The sequence is that of Energy-coupling factor transporter ATP-binding protein EcfA1 from Lacticaseibacillus paracasei (strain ATCC 334 / BCRC 17002 / CCUG 31169 / CIP 107868 / KCTC 3260 / NRRL B-441) (Lactobacillus paracasei).